A 348-amino-acid polypeptide reads, in one-letter code: RNA 3'-terminal phosphate cyclase (348 aa).

ATP is bound by residues Q107 and 290–294 (HLADQ). The Tele-AMP-histidine intermediate role is filled by H316.

This sequence belongs to the RNA 3'-terminal cyclase family. Type 1 subfamily.

It is found in the cytoplasm. The enzyme catalyses a 3'-end 3'-phospho-ribonucleotide-RNA + ATP = a 3'-end 2',3'-cyclophospho-ribonucleotide-RNA + AMP + diphosphate. Functionally, catalyzes the conversion of 3'-phosphate to a 2',3'-cyclic phosphodiester at the end of RNA. The mechanism of action of the enzyme occurs in 3 steps: (A) adenylation of the enzyme by ATP; (B) transfer of adenylate to an RNA-N3'P to produce RNA-N3'PP5'A; (C) and attack of the adjacent 2'-hydroxyl on the 3'-phosphorus in the diester linkage to produce the cyclic end product. The biological role of this enzyme is unknown but it is likely to function in some aspects of cellular RNA processing. The sequence is that of RNA 3'-terminal phosphate cyclase from Trichormus variabilis (strain ATCC 29413 / PCC 7937) (Anabaena variabilis).